A 163-amino-acid chain; its full sequence is ATP synthase subunit b 1 (163 aa).

Residues 7 to 27 traverse the membrane as a helical segment; it reads PETWVAIAFVILMGLFAYLGV.

Belongs to the ATPase B chain family. As to quaternary structure, F-type ATPases have 2 components, F(1) - the catalytic core - and F(0) - the membrane proton channel. F(1) has five subunits: alpha(3), beta(3), gamma(1), delta(1), epsilon(1). F(0) has three main subunits: a(1), b(2) and c(10-14). The alpha and beta chains form an alternating ring which encloses part of the gamma chain. F(1) is attached to F(0) by a central stalk formed by the gamma and epsilon chains, while a peripheral stalk is formed by the delta and b chains.

It is found in the cell inner membrane. F(1)F(0) ATP synthase produces ATP from ADP in the presence of a proton or sodium gradient. F-type ATPases consist of two structural domains, F(1) containing the extramembraneous catalytic core and F(0) containing the membrane proton channel, linked together by a central stalk and a peripheral stalk. During catalysis, ATP synthesis in the catalytic domain of F(1) is coupled via a rotary mechanism of the central stalk subunits to proton translocation. Its function is as follows. Component of the F(0) channel, it forms part of the peripheral stalk, linking F(1) to F(0). The polypeptide is ATP synthase subunit b 1 (Bradyrhizobium sp. (strain BTAi1 / ATCC BAA-1182)).